A 291-amino-acid chain; its full sequence is Tryptophan synthase alpha chain (291 aa).

Residues glutamate 69 and aspartate 80 each act as proton acceptor in the active site.

This sequence belongs to the TrpA family. Tetramer of two alpha and two beta chains.

It carries out the reaction (1S,2R)-1-C-(indol-3-yl)glycerol 3-phosphate + L-serine = D-glyceraldehyde 3-phosphate + L-tryptophan + H2O. It functions in the pathway amino-acid biosynthesis; L-tryptophan biosynthesis; L-tryptophan from chorismate: step 5/5. In terms of biological role, the alpha subunit is responsible for the aldol cleavage of indoleglycerol phosphate to indole and glyceraldehyde 3-phosphate. In Bifidobacterium longum (strain NCC 2705), this protein is Tryptophan synthase alpha chain.